Consider the following 161-residue polypeptide: Nucleotide-binding protein Ssed_3443 (161 aa).

Belongs to the YajQ family.

In terms of biological role, nucleotide-binding protein. The polypeptide is Nucleotide-binding protein Ssed_3443 (Shewanella sediminis (strain HAW-EB3)).